Reading from the N-terminus, the 407-residue chain is UDP-N-acetylglucosamine--N-acetylmuramyl-(pentapeptide) pyrophosphoryl-undecaprenol N-acetylglucosamine transferase (407 aa).

Positions 1 to 21 (MNNSVREPTRGRRGSPPVADA) are disordered. UDP-N-acetyl-alpha-D-glucosamine contacts are provided by residues 38–40 (TAG), N157, S228, and Q324.

It belongs to the glycosyltransferase 28 family. MurG subfamily.

The protein localises to the cell membrane. It carries out the reaction di-trans,octa-cis-undecaprenyl diphospho-N-acetyl-alpha-D-muramoyl-L-alanyl-D-glutamyl-meso-2,6-diaminopimeloyl-D-alanyl-D-alanine + UDP-N-acetyl-alpha-D-glucosamine = di-trans,octa-cis-undecaprenyl diphospho-[N-acetyl-alpha-D-glucosaminyl-(1-&gt;4)]-N-acetyl-alpha-D-muramoyl-L-alanyl-D-glutamyl-meso-2,6-diaminopimeloyl-D-alanyl-D-alanine + UDP + H(+). It functions in the pathway cell wall biogenesis; peptidoglycan biosynthesis. Cell wall formation. Catalyzes the transfer of a GlcNAc subunit on undecaprenyl-pyrophosphoryl-MurNAc-pentapeptide (lipid intermediate I) to form undecaprenyl-pyrophosphoryl-MurNAc-(pentapeptide)GlcNAc (lipid intermediate II). This chain is UDP-N-acetylglucosamine--N-acetylmuramyl-(pentapeptide) pyrophosphoryl-undecaprenol N-acetylglucosamine transferase, found in Mycobacterium leprae (strain TN).